Consider the following 397-residue polypeptide: Phosphoglycerate transport regulatory protein PgtC (397 aa).

An N-terminal signal peptide occupies residues 1-24; it reads MFGSCQAYSRELVMATTFSPSATA. Residues 102–117 form a helical membrane-spanning segment; it reads TSVAVAVSGFGLLINR.

The protein localises to the cell membrane. In terms of biological role, required for pgtP expression, it may act jointly with the PgtA/PgtB signaling proteins. This is Phosphoglycerate transport regulatory protein PgtC (pgtC) from Salmonella typhi.